Consider the following 166-residue polypeptide: Nascent polypeptide-associated complex subunit beta (166 aa).

2 disordered regions span residues 1 to 40 and 129 to 166; these read MVLNQEKLAKLQAASRTGGKGTPRRKMAPKPKGPGGEDPK and HAASQAAAAGTKDDDDVPDVVENFDEADKKETEVDKLD. Residues 35–100 enclose the NAC-A/B domain; it reads GGEDPKLQAA…GVDKELTELV (66 aa). Over residues 141 to 153 the composition is skewed to acidic residues; that stretch reads DDDDVPDVVENFD. Basic and acidic residues predominate over residues 154-166; that stretch reads EADKKETEVDKLD.

The protein belongs to the NAC-beta family. In terms of assembly, part of the nascent polypeptide-associated complex (NAC), consisting of EGD2 and EGD1. NAC associates with ribosomes via EGD1.

It is found in the cytoplasm. The protein localises to the nucleus. Its function is as follows. Component of the nascent polypeptide-associated complex (NAC), a dynamic component of the ribosomal exit tunnel, protecting the emerging polypeptides from interaction with other cytoplasmic proteins to ensure appropriate nascent protein targeting. The NAC complex also promotes mitochondrial protein import by enhancing productive ribosome interactions with the outer mitochondrial membrane and blocks the inappropriate interaction of ribosomes translating non-secretory nascent polypeptides with translocation sites in the membrane of the endoplasmic reticulum. EGD1 may act as a transcription factor that exert a negative effect on the expression of several genes that are transcribed by RNA polymerase II. This chain is Nascent polypeptide-associated complex subunit beta (EGD1), found in Mycosarcoma maydis (Corn smut fungus).